We begin with the raw amino-acid sequence, 195 residues long: ATP-dependent Clp protease proteolytic subunit (195 aa).

Ser-97 functions as the Nucleophile in the catalytic mechanism. The active site involves His-122.

This sequence belongs to the peptidase S14 family. As to quaternary structure, fourteen ClpP subunits assemble into 2 heptameric rings which stack back to back to give a disk-like structure with a central cavity, resembling the structure of eukaryotic proteasomes.

It localises to the cytoplasm. It catalyses the reaction Hydrolysis of proteins to small peptides in the presence of ATP and magnesium. alpha-casein is the usual test substrate. In the absence of ATP, only oligopeptides shorter than five residues are hydrolyzed (such as succinyl-Leu-Tyr-|-NHMec, and Leu-Tyr-Leu-|-Tyr-Trp, in which cleavage of the -Tyr-|-Leu- and -Tyr-|-Trp bonds also occurs).. Its function is as follows. Cleaves peptides in various proteins in a process that requires ATP hydrolysis. Has a chymotrypsin-like activity. Plays a major role in the degradation of misfolded proteins. This chain is ATP-dependent Clp protease proteolytic subunit, found in Campylobacter hominis (strain ATCC BAA-381 / DSM 21671 / CCUG 45161 / LMG 19568 / NCTC 13146 / CH001A).